The sequence spans 350 residues: Dihydroorotate dehydrogenase (quinone) (350 aa).

Residues 65 to 69 (AGLDK) and Thr-89 each bind FMN. Lys-69 contributes to the substrate binding site. 114-118 (NRLGF) contacts substrate. 2 residues coordinate FMN: Asn-149 and Asn-182. Residue Asn-182 participates in substrate binding. The Nucleophile role is filled by Ser-185. Asn-187 serves as a coordination point for substrate. The FMN site is built by Lys-227 and Thr-255. 256 to 257 (NT) contributes to the substrate binding site. Residues Gly-278, Gly-307, and 328-329 (YT) each bind FMN.

Belongs to the dihydroorotate dehydrogenase family. Type 2 subfamily. In terms of assembly, monomer. Requires FMN as cofactor.

The protein localises to the cell membrane. The catalysed reaction is (S)-dihydroorotate + a quinone = orotate + a quinol. It functions in the pathway pyrimidine metabolism; UMP biosynthesis via de novo pathway; orotate from (S)-dihydroorotate (quinone route): step 1/1. In terms of biological role, catalyzes the conversion of dihydroorotate to orotate with quinone as electron acceptor. The chain is Dihydroorotate dehydrogenase (quinone) from Polaromonas naphthalenivorans (strain CJ2).